We begin with the raw amino-acid sequence, 135 residues long: Classical arabinogalactan protein 4 (135 aa).

Residues 1 to 21 form the signal peptide; that stretch reads MGSKIVQVFLMLALFATSALA. A Pyrrolidone carboxylic acid modification is found at Gln22. A disordered region spans residues 22–112; it reads QAPAPTPTAT…PSDASPAPSA (91 aa). 9 positions are modified to 4-hydroxyproline: Pro24, Pro26, Pro28, Pro32, Pro33, Pro34, Pro37, Pro38, and Pro39. Residues Pro24, Pro26, Pro28, Pro32, Pro33, Pro34, Pro37, Pro38, and Pro39 are each glycosylated (O-linked (Ara...) hydroxyproline). Residues 25 to 76 are compositionally biased toward pro residues; sequence APTPTATPPPATPPPVATPPPVATPPPAATPAPATPPPAATPAPATTPPSVA. The span at 96-112 shows a compositional bias: low complexity; that stretch reads SPSSAPGPSDASPAPSA. Ser111 is lipidated: GPI-anchor amidated serine. A propeptide spans 112–135 (removed in mature form); sequence AAFSNKAFFAGTAFAAIMYAAVLA.

It belongs to the classical AGP family. In terms of processing, O-glycosylated on hydroxyprolines; noncontiguous hydroxylproline residues are glycosylated with arabinogalactan. As to expression, highly expressed in roots, flowers and leaves.

It is found in the cell membrane. Its function is as follows. Proteoglycan that seems to be implicated in diverse developmental roles such as differentiation, cell-cell recognition, embryogenesis and programmed cell death. This chain is Classical arabinogalactan protein 4 (AGP4), found in Arabidopsis thaliana (Mouse-ear cress).